Here is a 615-residue protein sequence, read N- to C-terminus: ATP-dependent RNA helicase DBP9 (615 aa).

The tract at residues 1–37 (MSASTKRKRDQAEESVPAENPASTDVEKAIKPAQKQE) is disordered. Residues 25–37 (DVEKAIKPAQKQE) show a composition bias toward basic and acidic residues. A Q motif motif is present at residues 40–68 (TSFVDLGLDPRLLQAIAQQKFAKPTLVQR). One can recognise a Helicase ATP-binding domain in the interval 71–248 (IPLALNGQDV…GIFRRDPTLL (178 aa)). 84–91 (ADCGSGKT) is an ATP binding site. The short motif at 196–199 (DEAD) is the DEAD box element. Residues 259 to 491 (GITQFVAKCG…PYNFNMKQVD (233 aa)) enclose the Helicase C-terminal domain. The segment covering 351 to 363 (GDDEEPAETAEAQ) has biased composition (acidic residues). Disordered regions lie at residues 351–396 (GDDE…DKEY) and 583–615 (KDKK…RKTK). Over residues 583–594 (KDKKGKGKKGRG) the composition is skewed to basic residues.

The protein belongs to the DEAD box helicase family. DDX56/DBP9 subfamily.

Its subcellular location is the nucleus. It is found in the nucleolus. It catalyses the reaction ATP + H2O = ADP + phosphate + H(+). In terms of biological role, ATP-binding RNA helicase involved in the biogenesis of 60S ribosomal subunits and is required for the normal formation of 25S and 5.8S rRNAs. This Gibberella zeae (strain ATCC MYA-4620 / CBS 123657 / FGSC 9075 / NRRL 31084 / PH-1) (Wheat head blight fungus) protein is ATP-dependent RNA helicase DBP9 (DBP9).